We begin with the raw amino-acid sequence, 124 residues long: Hydrogenase maturation factor HypA (124 aa).

Residue His2 participates in Ni(2+) binding. Cys78, Cys81, Cys97, and Cys100 together coordinate Zn(2+).

The protein belongs to the HypA/HybF family.

Functionally, involved in the maturation of [NiFe] hydrogenases. Required for nickel insertion into the metal center of the hydrogenase. This is Hydrogenase maturation factor HypA from Methanocaldococcus jannaschii (strain ATCC 43067 / DSM 2661 / JAL-1 / JCM 10045 / NBRC 100440) (Methanococcus jannaschii).